The sequence spans 707 residues: Transcription factor 12 (707 aa).

A disordered region spans residues 25 to 109 (AMFSPPVNSG…TPFMNSNLIG (85 aa)). 2 stretches are compositionally biased toward polar residues: residues 30-48 (PVNSGKTRPTTLGSSQFSG) and 56-76 (GTTSWGTSGQPSPSYDSSRGF). 3 positions are modified to phosphoserine: Ser47, Ser67, and Ser79. Basic and acidic residues predominate over residues 81–93 (HYSDHLNDSRLGT). Ser98 bears the Phosphoserine mark. Lys110 participates in a covalent cross-link: Glycyl lysine isopeptide (Lys-Gly) (interchain with G-Cter in SUMO2). Ser116 and Ser124 each carry phosphoserine. Residues 119–140 (LYSRDSGLSGCQSSLLRQDLGL) form a leucine-zipper region. Disordered stretches follow at residues 140–222 (LGSP…SMFA) and 249–313 (FGGI…ASHT). Residues 144-163 (AQLSSSGKPGTPYYSFSATS) show a composition bias toward polar residues. Lys181 is covalently cross-linked (Glycyl lysine isopeptide (Lys-Gly) (interchain with G-Cter in SUMO2)). Positions 256 to 269 (STSHMSQSSSYGSL) are enriched in low complexity. Polar residues predominate over residues 282–306 (VSPTDINTSLPPMSSFHRGSTSSSP). The residue at position 313 (Thr313) is a Phosphothreonine. Ser333 is modified (phosphoserine). Disordered stretches follow at residues 349–393 (PDHT…YENS) and 521–605 (HKTP…ERRM). Residues 352–363 (TSSSFPSNPSTP) are compositionally biased toward low complexity. Polar residues-rich tracts occupy residues 364–377 (VGSPSPLTAGTSQW) and 384–393 (APSSPSYENS). 2 stretches are compositionally biased toward basic and acidic residues: residues 543 to 555 (IKTENKEKDENLH) and 561 to 576 (DDMKSDDESSQKDIKV). Lys544 participates in a covalent cross-link: Glycyl lysine isopeptide (Lys-Gly) (interchain with G-Cter in SUMO2). Residue Ser565 is modified to Phosphoserine. Lys575 participates in a covalent cross-link: Glycyl lysine isopeptide (Lys-Gly) (interchain with G-Cter in SUMO2). At Thr582 the chain carries Phosphothreonine. Ser583 and Ser584 each carry phosphoserine. Residues 593 to 605 (PEQKIEREKERRM) are compositionally biased toward basic and acidic residues. The region spanning 602–655 (ERRMANNARERLRVRDINEAFKELGRMCQLHLKSEKPQTKLLILHQAVAVILSL) is the bHLH domain. Glycyl lysine isopeptide (Lys-Gly) (interchain with G-Cter in SUMO2) cross-links involve residues Lys634 and Lys678. Residues 657 to 680 (QQVRERNLNPKAACLKRREEEKVS) are class A specific domain. Residues 675-707 (EEEKVSAASAEPPTTLPGTHPGLSETTNPMGHL) form a disordered region. Residues 686–697 (PPTTLPGTHPGL) show a composition bias toward low complexity. Positions 698-707 (SETTNPMGHL) are enriched in polar residues.

Efficient DNA binding requires dimerization with another bHLH protein. Forms homo- or heterooligomers with myogenin, E12 and ITF2 proteins. Interacts with PTF1. Interacts with RUNX1T1. Interacts with NEUROD2. Interacts with BHLHA9. In terms of tissue distribution, isoform gamma is highly expressed in lung, kidney, spleen, and is expressed at reduced levels in heart, muscle, liver, pituitary, brain and the trigeminal ganglion. The expression of isoform alpha predominates over isoform gamma in the pituitary and the brain.

The protein resides in the nucleus. In terms of biological role, transcriptional regulator. Involved in the initiation of neuronal differentiation. Activates transcription by binding to the E box (5'-CANNTG-3'). May be involved in the functional network that regulates the development of the GnRH axis. In Rattus norvegicus (Rat), this protein is Transcription factor 12 (Tcf12).